Reading from the N-terminus, the 382-residue chain is D-galactonate dehydratase (382 aa).

Residue D183 participates in Mg(2+) binding. Residue H185 is the Proton donor of the active site. Residues E209 and E235 each coordinate Mg(2+). H285 functions as the Proton acceptor in the catalytic mechanism.

This sequence belongs to the mandelate racemase/muconate lactonizing enzyme family. GalD subfamily. It depends on Mg(2+) as a cofactor.

It carries out the reaction D-galactonate = 2-dehydro-3-deoxy-D-galactonate + H2O. The protein operates within carbohydrate acid metabolism; D-galactonate degradation; D-glyceraldehyde 3-phosphate and pyruvate from D-galactonate: step 1/3. Catalyzes the dehydration of D-galactonate to 2-keto-3-deoxy-D-galactonate. This Salmonella choleraesuis (strain SC-B67) protein is D-galactonate dehydratase.